Reading from the N-terminus, the 420-residue chain is Sulfate adenylyltransferase (420 aa).

Ala-2 carries the N-acetylalanine modification.

This sequence belongs to the sulfate adenylyltransferase family. Mg(2+) serves as cofactor.

It catalyses the reaction sulfate + ATP + H(+) = adenosine 5'-phosphosulfate + diphosphate. It participates in sulfur metabolism; hydrogen sulfide biosynthesis; sulfite from sulfate: step 1/3. Its activity is regulated as follows. Inhibited by adenosine 5'-phosphosulfate (APS), but not by 3'phosphoadenosine 5'-phosphosulfate (PAPS). Inhibited by AMP, ADP, CTP, GTP, ITP, UTP and anions other than those in group IV. In Pyropia yezoensis (Susabi-nori), this protein is Sulfate adenylyltransferase.